A 460-amino-acid polypeptide reads, in one-letter code: Tyrosine phenol-lyase (460 aa).

Residue K260 is modified to N6-(pyridoxal phosphate)lysine.

This sequence belongs to the beta-eliminating lyase family. As to quaternary structure, homotetramer. It depends on pyridoxal 5'-phosphate as a cofactor.

The enzyme catalyses L-tyrosine + H2O = phenol + pyruvate + NH4(+). This is Tyrosine phenol-lyase from Clostridium tetani (strain Massachusetts / E88).